Here is a 137-residue protein sequence, read N- to C-terminus: Large ribosomal subunit protein bL17 (137 aa).

The protein belongs to the bacterial ribosomal protein bL17 family. Part of the 50S ribosomal subunit. Contacts protein L32.

The polypeptide is Large ribosomal subunit protein bL17 (Bradyrhizobium sp. (strain BTAi1 / ATCC BAA-1182)).